We begin with the raw amino-acid sequence, 458 residues long: tRNA modification GTPase MnmE (458 aa).

(6S)-5-formyl-5,6,7,8-tetrahydrofolate is bound by residues Arg-26, Glu-88, and Arg-127. The TrmE-type G domain maps to 224 to 378 (GLSTAIIGRP…IEDRINQLFF (155 aa)). Asn-234 is a binding site for K(+). GTP-binding positions include 234–239 (NVGKSS), 253–259 (TDIAGTT), and 278–281 (DTAG). Ser-238 lines the Mg(2+) pocket. K(+) contacts are provided by Thr-253, Ile-255, and Thr-258. Thr-259 contacts Mg(2+). Lys-458 is a (6S)-5-formyl-5,6,7,8-tetrahydrofolate binding site.

The protein belongs to the TRAFAC class TrmE-Era-EngA-EngB-Septin-like GTPase superfamily. TrmE GTPase family. As to quaternary structure, homodimer. Heterotetramer of two MnmE and two MnmG subunits. K(+) is required as a cofactor.

It is found in the cytoplasm. Exhibits a very high intrinsic GTPase hydrolysis rate. Involved in the addition of a carboxymethylaminomethyl (cmnm) group at the wobble position (U34) of certain tRNAs, forming tRNA-cmnm(5)s(2)U34. The sequence is that of tRNA modification GTPase MnmE from Streptococcus pyogenes serotype M1.